The following is a 1026-amino-acid chain: MKFFALFIYRPVATTLLTLAIAISGVISFSLLPVSPLPQVDYPVISISASLPGADPETMASSVATPLERALGRIAGVNEMTSMSSLGSTRVILQFDLDRDINGAARDVQAAINAAQSLLPTGMPSRPSYRKVNPSDAPIMILTLTSDTYSQGQLYDFASTQLAQKIAQTEGVGDVSVGGSSLPAVRVELNPSALFNQGISLDAVRQTISNANVRRPQGSVENQQQRWQIQANDELKTAEVYRPLIIHYNNGSAVRLSDVAEVNDSVQDVRNAGMTNAKPAIILTISRAPDANIIETVDRIRAELPTLQNNIPASIQLNIAQDRSPTIRASLAEVEQSLVIAIGLVILVVFIFLRSGRATLIPAVAVPVSLIGSFTAMYLCGFSLNNLSLMALTIATGFVVDDAIVVLENISRHIEAGMKPINAALVGVREVGFTVLSMSVSLVAVFIPLLLMEGLPGRLFREFAVTLSVSIGLSLIISLTLTPMMCAYLLRHQPPRSQRRIRGFGKMLLALQKGYGRSLSWVLGHSRWVLAVFLATIALNVWLYVSIPKTFFPEQDTGRLMGFIQADQSISFQAMRVKLEDFMKIVREDPDVDNVTGFTGGSRTNSGSMFISLKPLSVRSDDAQKVIARLRAKLAKEPGASLFLMAVQDIRVGGRQANASYQYTLMADDLAALREWEPKIRTALAALPELADVNSDQQDKGSEMDLVYDRETMARLGISVSDANNLLNNAFGQRQISTIYQPLNQYKVVMEVAPPYTQDVSSLDKMFVINSDGKAIPLSYFASWRPANAPLSVNHQGLSAASTISFNLPDGGSLSDATAGIERTMTALGVPATVRGAFAGTAQVFQETLKSQLLLIAAAIATVYIVLGILYESYIHPLTILSTLPSAGVGALLALELFGAPFSLIALIGIMLLIGIVKKNAIMMVDFALDAQRNGGISAHDAIFQACLLRFRPIMMTTLAALFGALPLVLTHGDGAELRQPLGITIVGGLIVSQLLTLYTTPVVYLYFDRLQMKFRRGKKLDPLPQ.

Transmembrane regions (helical) follow at residues 12–32 (VATT…FSLL), 333–353 (EVEQ…FIFL), 360–380 (LIPA…MYLC), 387–407 (LSLM…IVVL), 431–451 (VGFT…PLLL), 463–483 (FAVT…TLTP), 528–548 (WVLA…VSIP), 853–873 (LLLI…LYES), 897–917 (LFGA…IGIV), 953–973 (PIMM…LTHG), and 984–1004 (ITIV…TPVV).

It belongs to the resistance-nodulation-cell division (RND) (TC 2.A.6) family. MdtC subfamily. As to quaternary structure, part of a tripartite efflux system composed of MdtA, MdtB and MdtC. MdtC forms a heteromultimer with MdtB.

It localises to the cell inner membrane. The polypeptide is Multidrug resistance protein MdtC (Serratia proteamaculans (strain 568)).